We begin with the raw amino-acid sequence, 310 residues long: Probable cobalamin biosynthesis protein CobD (310 aa).

5 helical membrane passes run 53 to 73 (LVFG…IFFT), 80 to 100 (LISN…FSIG), 157 to 177 (DSII…AFIY), 215 to 235 (IAGI…VPAI), and 289 to 309 (AVDY…FNLI).

It belongs to the CobD/CbiB family.

Its subcellular location is the cell membrane. It participates in cofactor biosynthesis; adenosylcobalamin biosynthesis. In terms of biological role, converts cobyric acid to cobinamide by the addition of aminopropanol on the F carboxylic group. The chain is Probable cobalamin biosynthesis protein CobD from Methanococcus vannielii (strain ATCC 35089 / DSM 1224 / JCM 13029 / OCM 148 / SB).